A 235-amino-acid polypeptide reads, in one-letter code: Post-translational flagellin modification protein B (235 aa).

This sequence belongs to the CMP-NeuNAc synthase family.

In terms of biological role, required for biosynthesis of LAH modification in the post-translational modification of Campylobacter coli flagellin. The chain is Post-translational flagellin modification protein B (ptmB) from Campylobacter coli.